The following is a 167-amino-acid chain: Transmembrane protein B169L (167 aa).

The next 2 membrane-spanning stretches (helical) occupy residues 28–48 (NPFIVALIITAVVLVVFFAIC) and 60–80 (TAIYLYICIVALLFLHYYVLN). N-linked (GlcNAc...) asparagine; by host glycosylation is present at N88.

Belongs to the asfivirus B169L family.

Its subcellular location is the host membrane. The protein resides in the virion. This chain is Transmembrane protein B169L, found in African swine fever virus (isolate Tick/Malawi/Lil 20-1/1983) (ASFV).